The primary structure comprises 577 residues: Arginine--tRNA ligase (577 aa).

Positions 124 to 132 match the 'HIGH' region motif; that stretch reads VAKEMHVGH.

Belongs to the class-I aminoacyl-tRNA synthetase family. As to quaternary structure, monomer.

It is found in the cytoplasm. It catalyses the reaction tRNA(Arg) + L-arginine + ATP = L-arginyl-tRNA(Arg) + AMP + diphosphate. This chain is Arginine--tRNA ligase, found in Salmonella typhi.